A 267-amino-acid chain; its full sequence is 14-3-3-like protein GF14 phi (267 aa).

A2 is subject to N-acetylalanine. Phosphoserine is present on residues S73 and S196. At T217 the chain carries Phosphothreonine. The segment at 244 to 267 is disordered; sequence MQDESPEEIKEAAAPKPAEEQKEI. The residue at position 248 (S248) is a Phosphoserine. Residues 250-267 are compositionally biased toward basic and acidic residues; it reads EEIKEAAAPKPAEEQKEI.

This sequence belongs to the 14-3-3 family. Interacts with FD. Interacts with CINV1.

The protein resides in the nucleus. It is found in the cytoplasm. In terms of biological role, is associated with a DNA binding complex that binds to the G box, a well-characterized cis-acting DNA regulatory element found in plant genes. This chain is 14-3-3-like protein GF14 phi (GRF4), found in Arabidopsis thaliana (Mouse-ear cress).